The sequence spans 286 residues: Bark agglutinin I polypeptide B (286 aa).

An N-terminal signal peptide occupies residues 1–31; sequence MASYKFKTQNSFLLLLSISFFFLLLLNKVNS. N148 is a glycosylation site (N-linked (GlcNAc...) asparagine). Residues E157 and D159 each contribute to the Mn(2+) site. D159, N163, and D167 together coordinate Ca(2+). Residues D167 and H172 each coordinate Mn(2+).

Belongs to the leguminous lectin family. RPbAI is composed of two polypeptides, A and B, that associate into five different tetrameric isolectins. The A4 combination is the only one devoid of agglutination activity. Isoform B4 displays maximal agglutination activity. In terms of tissue distribution, mostly in the axial and ray parenchymal cells of the inner bark. Fewer in the axial and ray parenchymal cells of the xylem. Strong expression in bark. The lectin accumulates in the inner bark in autumn and winter and disappears in may.

Bark lectins are storage proteins that probably maintain stocks of nitrogen during dormant period. Self-aggregatable molecules that can bind their own carbohydrate side chains. They could also play a role in the plant's defense against phytophagous invertebrates or herbivorous higher animals. In Robinia pseudoacacia (Black locust), this protein is Bark agglutinin I polypeptide B.